A 297-amino-acid polypeptide reads, in one-letter code: Vacuolar protein sorting-associated protein 26 (297 aa).

The protein belongs to the VPS26 family. As to quaternary structure, component of the retromer complex, composed of VPS26, VPS29 and VPS35. As part of the retromer complex, interacts with the sorting receptor SORTLR/sortilin. Interacts with GTPase RAB7.

In terms of biological role, plays a role in vesicular protein sorting. Component of the membrane-associated retromer complex which is essential in endosome-to-Golgi retrograde transport. The protein is Vacuolar protein sorting-associated protein 26 of Plasmodium falciparum (isolate 3D7).